Here is a 452-residue protein sequence, read N- to C-terminus: Major royal jelly protein 2 (452 aa).

The signal sequence occupies residues 1-17 (MTRWLFMVACLGIACQG). Asn-145 and Asn-178 each carry an N-linked (GlcNAc...) asparagine glycan. The disordered stretch occupies residues 416 to 452 (NNNQNDNIQNTNNQNDNNQKNNKKNANNQKNNNQNDN).

Post-translationally, N-linked core structure contains mannose (which consists of 8-alpha-mannosyl residues, one beta-mannosyl residue, and chitobiose). In terms of tissue distribution, secreted from the hypopharyngeal glands of the worker honey bee (at protein level); expression peaks at 12 days post eclosion. Expressed in the brains of adult worker bees peaking at 12 days post eclosion (at protein level). Expressed in the spermatheca of adult queen bees (at protein level); Expression levels are higher in mated queens than in virgin queens.

Its subcellular location is the secreted. Its function is as follows. Highly abundant protein component of royal jelly, a substance produced in the hypopharyngeal gland containing proteins, free amino acids, fatty acids, sugars and other nutrients, which is fed to developing larvae by worker nurse bees. Major royal jelly proteins (MRJPs) are high in essential amino acids and probably have a nutritional function in larval food. All larvae are fed some royal jelly (also known as worker jelly) early in their development but it forms the principal source of nutrition for larvae destined to become queen bees. Produced in the spermatheca of adult queen bees, along with other major royal jelly proteins, where it may act as a nutrient supply for sperm stored by mated queens, or be involved in energy metabolism. In Apis mellifera (Honeybee), this protein is Major royal jelly protein 2.